The following is a 196-amino-acid chain: Late protein I196L (196 aa).

Tandem repeats lie at residues 28 to 48 (SNYL…PTTS) and 49 to 70 (SNYL…TTTS). Residues 71 to 92 (SNYLTSAIPNIISDKEDDTPFS) form a 3; approximate repeat.

Belongs to the asfivirus I196L family.

The sequence is that of Late protein I196L from African swine fever virus (strain Badajoz 1971 Vero-adapted) (Ba71V).